A 319-amino-acid polypeptide reads, in one-letter code: Translocon-associated protein subunit alpha (319 aa).

The N-terminal stretch at 1-21 (MRLLPRLLLLFLLAFPAAVLL) is a signal peptide. Over 22-208 (RGGPGGSLAV…EREDGLDGET (187 aa)) the chain is Lumenal. Acidic residues predominate over residues 35 to 76 (LTEDEETVEDPIIEDEDDEAEVEEDEPTDLAEEKEEEEDVSS). Residues 35–84 (LTEDEETVEDPIIEDEDDEAEVEEDEPTDLAEEKEEEEDVSSEPEASPSA) form a disordered region. N-linked (GlcNAc...) asparagine glycosylation is found at N137 and N192. A helical membrane pass occupies residues 209 to 229 (IFMYMFLAGLGLLVVVGLHQL). Over 230-319 (LESRKRKRPI…SLRQLAVCGI (90 aa)) the chain is Cytoplasmic. The residue at position 248 (S248) is a Phosphoserine. T261 bears the Phosphothreonine mark.

This sequence belongs to the TRAP-alpha family. As to quaternary structure, heterotetramer of TRAP-alpha, TRAP-beta, TRAP-delta and TRAP-gamma. Interacts with palmitoylated calnexin (CALX), the interaction is required for efficient folding of glycosylated proteins.

The protein localises to the endoplasmic reticulum membrane. TRAP proteins are part of a complex whose function is to bind calcium to the ER membrane and thereby regulate the retention of ER resident proteins. May be involved in the recycling of the translocation apparatus after completion of the translocation process or may function as a membrane-bound chaperone facilitating folding of translocated proteins. This is Translocon-associated protein subunit alpha (Ssr1) from Rattus norvegicus (Rat).